We begin with the raw amino-acid sequence, 360 residues long: Mannonate dehydratase (360 aa).

Belongs to the mannonate dehydratase family. Fe(2+) is required as a cofactor. The cofactor is Mn(2+).

It carries out the reaction D-mannonate = 2-dehydro-3-deoxy-D-gluconate + H2O. The protein operates within carbohydrate metabolism; pentose and glucuronate interconversion. In terms of biological role, catalyzes the dehydration of D-mannonate. The chain is Mannonate dehydratase (uxuA) from Thermotoga neapolitana.